Here is a 553-residue protein sequence, read N- to C-terminus: NAD(P)H-quinone oxidoreductase chain 4 2 (553 aa).

14 helical membrane passes run 6 to 26 (FPWLSAIILLPLLASFLIPVI), 34 to 54 (VRWFALGVGLADFILMCYVFL), 87 to 107 (ISAPLVLLAGLVTTLSILAAW), 115 to 135 (LFYFLMLLLYAAQIGVFVAQD), 136 to 156 (LLLFFLMWEIELIPVYLLVSI), 169 to 189 (FLLYTAAASIFILVAGLAMAL), 210 to 230 (ALELVLYAGLLIAFGVKLAIF), 244 to 264 (SAPVSMILAGVLLKMGGYGLI), 276 to 296 (IYFAPILAILGVVNIIYGAFA), 312 to 332 (VSHMGFVLLGIASFTDVGISG), 333 to 353 (AMLQMLSHGLIAAVLFFLAGV), 376 to 396 (VFALFTAGAMASLALPGMSGF), 418 to 438 (VVTVFLASVGLILTPIYLLSM), and 487 to 507 (IFIAVSFLALIVAIGFYPQLA).

This sequence belongs to the complex I subunit 4 family.

The protein localises to the cellular thylakoid membrane. The enzyme catalyses a plastoquinone + NADH + (n+1) H(+)(in) = a plastoquinol + NAD(+) + n H(+)(out). It carries out the reaction a plastoquinone + NADPH + (n+1) H(+)(in) = a plastoquinol + NADP(+) + n H(+)(out). NDH-1 shuttles electrons from NAD(P)H, via FMN and iron-sulfur (Fe-S) centers, to quinones in the respiratory chain. The immediate electron acceptor for the enzyme in this species is believed to be plastoquinone. Couples the redox reaction to proton translocation (for every two electrons transferred, four hydrogen ions are translocated across the cytoplasmic membrane), and thus conserves the redox energy in a proton gradient. In Microcystis aeruginosa (strain NIES-843 / IAM M-2473), this protein is NAD(P)H-quinone oxidoreductase chain 4 2.